A 203-amino-acid chain; its full sequence is Glycerol-3-phosphate acyltransferase (203 aa).

The next 4 helical transmembrane spans lie at 6–26, 82–102, 118–138, and 141–161; these read LTLLMIVAAYLAGSVSSAVLV, AISLGLIAIAACLGHIYPIFF, APIGDDLAICLMASWVVLVLI, and YSSLAAIITALLAPLYTWWLD.

The protein belongs to the PlsY family. Probably interacts with PlsX.

Its subcellular location is the cell inner membrane. The catalysed reaction is an acyl phosphate + sn-glycerol 3-phosphate = a 1-acyl-sn-glycero-3-phosphate + phosphate. It participates in lipid metabolism; phospholipid metabolism. In terms of biological role, catalyzes the transfer of an acyl group from acyl-phosphate (acyl-PO(4)) to glycerol-3-phosphate (G3P) to form lysophosphatidic acid (LPA). This enzyme utilizes acyl-phosphate as fatty acyl donor, but not acyl-CoA or acyl-ACP. The polypeptide is Glycerol-3-phosphate acyltransferase (Shewanella sp. (strain ANA-3)).